We begin with the raw amino-acid sequence, 701 residues long: Polyribonucleotide nucleotidyltransferase (701 aa).

Mg(2+) is bound by residues aspartate 489 and aspartate 495. The 60-residue stretch at 556 to 615 (PRIHTMKIHPDKIREVIGSGGKVIRSITEETGCAIDIEDDGTIRIASSDQASAEQAVKII) folds into the KH domain. The S1 motif domain maps to 625 to 693 (GQVYEGKVVR…RQGRVKLTMK (69 aa)).

This sequence belongs to the polyribonucleotide nucleotidyltransferase family. Requires Mg(2+) as cofactor.

It localises to the cytoplasm. The catalysed reaction is RNA(n+1) + phosphate = RNA(n) + a ribonucleoside 5'-diphosphate. Involved in mRNA degradation. Catalyzes the phosphorolysis of single-stranded polyribonucleotides processively in the 3'- to 5'-direction. This Magnetococcus marinus (strain ATCC BAA-1437 / JCM 17883 / MC-1) protein is Polyribonucleotide nucleotidyltransferase.